The sequence spans 159 residues: 6,7-dimethyl-8-ribityllumazine synthase (159 aa).

5-amino-6-(D-ribitylamino)uracil contacts are provided by residues W26, 57–59 (ALE), and 79–81 (CVV). 84–85 (GT) is a (2S)-2-hydroxy-3-oxobutyl phosphate binding site. H87 functions as the Proton donor in the catalytic mechanism. Position 112 (N112) interacts with 5-amino-6-(D-ribitylamino)uracil. (2S)-2-hydroxy-3-oxobutyl phosphate is bound at residue R126.

The protein belongs to the DMRL synthase family.

The catalysed reaction is (2S)-2-hydroxy-3-oxobutyl phosphate + 5-amino-6-(D-ribitylamino)uracil = 6,7-dimethyl-8-(1-D-ribityl)lumazine + phosphate + 2 H2O + H(+). It functions in the pathway cofactor biosynthesis; riboflavin biosynthesis; riboflavin from 2-hydroxy-3-oxobutyl phosphate and 5-amino-6-(D-ribitylamino)uracil: step 1/2. Functionally, catalyzes the formation of 6,7-dimethyl-8-ribityllumazine by condensation of 5-amino-6-(D-ribitylamino)uracil with 3,4-dihydroxy-2-butanone 4-phosphate. This is the penultimate step in the biosynthesis of riboflavin. This Corynebacterium glutamicum (strain ATCC 13032 / DSM 20300 / JCM 1318 / BCRC 11384 / CCUG 27702 / LMG 3730 / NBRC 12168 / NCIMB 10025 / NRRL B-2784 / 534) protein is 6,7-dimethyl-8-ribityllumazine synthase.